The sequence spans 135 residues: uncharacterized protein (135 aa).

One can recognise an HTH hxlR-type domain in the interval 25-123 (CPIQHVVDLL…LGSDWLEQES (99 aa)).

This is an uncharacterized protein from Synechocystis sp. (strain ATCC 27184 / PCC 6803 / Kazusa).